A 551-amino-acid polypeptide reads, in one-letter code: E3 ubiquitin-protein ligase TRIM8 (551 aa).

The segment at 15–56 (CPICLHVFVEPVQLPCKHNFCRGCIGEAWAKDSGLVRCPECN) adopts an RING-type zinc-finger fold. 2 consecutive B box-type zinc fingers follow at residues 92-132 (CVFC…ARGH) and 140-182 (VRAW…VCDV). Coiled coils occupy residues 181–249 (DVEI…DLRQ) and 274–295 (ERMQ…KTED). Positions 399-457 (QYGAAGTASSEGQSGQPLGPCSSTQHLVALPGGTQPVHSSPVFPPSQYPNGSTTQQPML) are disordered. Composition is skewed to polar residues over residues 405–424 (TASS…STQH) and 446–456 (YPNGSTTQQPM).

Belongs to the TRIM/RBCC family. As to quaternary structure, homodimer. Interacts with SOCS1 (via) SH2 domain and SOCS box. Interacts with HSP90AB1; prevents nucleus translocation of phosphorylated STAT3 and HSP90AB1. Interacts with MAP3K7/TAK1. Interacts with PIAS3. Interacts with TICAM1. Interacts with TRIM15; this interaction prevents TRIM8 cytoplasmic translocation. In terms of tissue distribution, high expression in heart, liver, and thymus. Expressed in embryonic CNS, kidney, lens and gut.

It carries out the reaction S-ubiquitinyl-[E2 ubiquitin-conjugating enzyme]-L-cysteine + [acceptor protein]-L-lysine = [E2 ubiquitin-conjugating enzyme]-L-cysteine + N(6)-ubiquitinyl-[acceptor protein]-L-lysine.. Its pathway is protein modification; protein ubiquitination. E3 ubiquitin-protein ligase that participates in multiple biological processes including cell survival, differentiation, apoptosis, and in particular, the innate immune response. Participates in the activation of interferon-gamma signaling by promoting proteasomal degradation of the repressor SOCS1. Plays a positive role in the TNFalpha and IL-1beta signaling pathways. Mechanistically, induces the 'Lys-63'-linked polyubiquitination of MAP3K7/TAK1 component leading to the activation of NF-kappa-B. Also modulates STAT3 activity through negative regulation of PIAS3, either by degradation of PIAS3 through the ubiquitin-proteasome pathway or exclusion of PIAS3 from the nucleus. Negatively regulates TLR3/4-mediated innate immune response by catalyzing 'Lys-6'- and 'Lys-33'-linked polyubiquitination of TICAM1 and thereby disrupting the TICAM1-TBK1 interaction. This chain is E3 ubiquitin-protein ligase TRIM8 (Trim8), found in Mus musculus (Mouse).